The primary structure comprises 358 residues: Glycerol-3-phosphate dehydrogenase [NAD(P)+] (358 aa).

NADPH contacts are provided by S33, F34, R54, and K128. Residues K128 and G156 each contribute to the sn-glycerol 3-phosphate site. A160 lines the NADPH pocket. 5 residues coordinate sn-glycerol 3-phosphate: K211, D264, S274, R275, and N276. K211 acts as the Proton acceptor in catalysis. R275 lines the NADPH pocket. 2 residues coordinate NADPH: V299 and E301.

The protein belongs to the NAD-dependent glycerol-3-phosphate dehydrogenase family.

The protein localises to the cytoplasm. It catalyses the reaction sn-glycerol 3-phosphate + NAD(+) = dihydroxyacetone phosphate + NADH + H(+). The enzyme catalyses sn-glycerol 3-phosphate + NADP(+) = dihydroxyacetone phosphate + NADPH + H(+). It functions in the pathway membrane lipid metabolism; glycerophospholipid metabolism. In terms of biological role, catalyzes the reduction of the glycolytic intermediate dihydroxyacetone phosphate (DHAP) to sn-glycerol 3-phosphate (G3P), the key precursor for phospholipid synthesis. The sequence is that of Glycerol-3-phosphate dehydrogenase [NAD(P)+] from Saccharophagus degradans (strain 2-40 / ATCC 43961 / DSM 17024).